The following is a 76-amino-acid chain: Large ribosomal subunit protein uL29 (76 aa).

The protein belongs to the universal ribosomal protein uL29 family.

This Corynebacterium kroppenstedtii (strain DSM 44385 / JCM 11950 / CIP 105744 / CCUG 35717) protein is Large ribosomal subunit protein uL29.